Consider the following 122-residue polypeptide: Crustacean hyperglycemic hormones 7 (122 aa).

Residues 1–26 (MSLAMTAFRMMAVALVVVVASSTTWA) form the signal peptide. 3 disulfides stabilise this stretch: Cys55-Cys91, Cys71-Cys87, and Cys74-Cys100. The residue at position 120 (Val120) is a Valine amide.

The protein belongs to the arthropod CHH/MIH/GIH/VIH hormone family. Produced by the medulla terminalis X-organ in the eyestalks and transported to the sinus gland where they are stored and released.

Its subcellular location is the secreted. In terms of biological role, hormone found in the sinus gland of isopods and decapods which controls the blood sugar level. Has a secretagogue action over the amylase released from the midgut gland. May act as a stress hormone and may be involved in the control of molting and reproduction. This is Crustacean hyperglycemic hormones 7 from Penaeus japonicus (Kuruma prawn).